A 281-amino-acid chain; its full sequence is 2-dehydro-3-deoxyphosphooctonate aldolase (281 aa).

This sequence belongs to the KdsA family.

Its subcellular location is the cytoplasm. The enzyme catalyses D-arabinose 5-phosphate + phosphoenolpyruvate + H2O = 3-deoxy-alpha-D-manno-2-octulosonate-8-phosphate + phosphate. It participates in carbohydrate biosynthesis; 3-deoxy-D-manno-octulosonate biosynthesis; 3-deoxy-D-manno-octulosonate from D-ribulose 5-phosphate: step 2/3. It functions in the pathway bacterial outer membrane biogenesis; lipopolysaccharide biosynthesis. The protein is 2-dehydro-3-deoxyphosphooctonate aldolase of Pseudomonas putida (strain GB-1).